A 215-amino-acid polypeptide reads, in one-letter code: Cytochrome b6 (215 aa).

A helical membrane pass occupies residues 32–52 (IFYCLGGITLTCFIVQVATGF). Cys-35 contributes to the heme c binding site. Residues His-86 and His-100 each contribute to the heme b site. Transmembrane regions (helical) follow at residues 90-110 (ASMM…TGGF), 116-136 (LTWI…VTGY), and 186-206 (LHTF…FLMI). Positions 187 and 202 each coordinate heme b.

Belongs to the cytochrome b family. PetB subfamily. In terms of assembly, the 4 large subunits of the cytochrome b6-f complex are cytochrome b6, subunit IV (17 kDa polypeptide, PetD), cytochrome f and the Rieske protein, while the 4 small subunits are PetG, PetL, PetM and PetN. The complex functions as a dimer. Heme b serves as cofactor. It depends on heme c as a cofactor.

Its subcellular location is the plastid. It localises to the chloroplast thylakoid membrane. Its function is as follows. Component of the cytochrome b6-f complex, which mediates electron transfer between photosystem II (PSII) and photosystem I (PSI), cyclic electron flow around PSI, and state transitions. This chain is Cytochrome b6, found in Chara vulgaris (Common stonewort).